The following is a 366-amino-acid chain: NADH-quinone oxidoreductase subunit D (366 aa).

Belongs to the complex I 49 kDa subunit family. NDH-1 is composed of 14 different subunits. Subunits NuoB, C, D, E, F, and G constitute the peripheral sector of the complex.

Its subcellular location is the cell membrane. It carries out the reaction a quinone + NADH + 5 H(+)(in) = a quinol + NAD(+) + 4 H(+)(out). Functionally, NDH-1 shuttles electrons from NADH, via FMN and iron-sulfur (Fe-S) centers, to quinones in the respiratory chain. The immediate electron acceptor for the enzyme in this species is believed to be a menaquinone. Couples the redox reaction to proton translocation (for every two electrons transferred, four hydrogen ions are translocated across the cytoplasmic membrane), and thus conserves the redox energy in a proton gradient. In Bacillus cytotoxicus (strain DSM 22905 / CIP 110041 / 391-98 / NVH 391-98), this protein is NADH-quinone oxidoreductase subunit D.